The sequence spans 398 residues: Lysophospholipid transporter LplT (398 aa).

Helical transmembrane passes span 17 to 37, 52 to 72, 90 to 110, 137 to 157, 163 to 183, 226 to 246, 256 to 276, 285 to 305, 309 to 329, 352 to 372, and 373 to 393; these read AVLV…FAIL, ILQI…GQIA, LGAF…LVGV, GLME…GGFL, AIAL…NFFI, LFWG…PVVL, ILNV…ARFI, MPAG…HSIW, VLLI…NALL, IAML…VPVV, and TTGI…WIWN.

Belongs to the major facilitator superfamily. LplT (TC 2.A.1.42) family.

It localises to the cell inner membrane. In terms of biological role, catalyzes the facilitated diffusion of 2-acyl-glycero-3-phosphoethanolamine (2-acyl-GPE) into the cell. The sequence is that of Lysophospholipid transporter LplT from Photorhabdus laumondii subsp. laumondii (strain DSM 15139 / CIP 105565 / TT01) (Photorhabdus luminescens subsp. laumondii).